A 553-amino-acid chain; its full sequence is Transcription factor GAMYB (553 aa).

Residues 1-17 are compositionally biased toward basic and acidic residues; it reads MYRVKSESDCDMIHQEQ. The disordered stretch occupies residues 1–45; sequence MYRVKSESDCDMIHQEQMDSPVADDGSSGGSPHRGGGPPLKKGPW. A compositionally biased stretch (gly residues) spans 27-38; sequence SSGGSPHRGGGP. HTH myb-type domains follow at residues 37–89 and 90–144; these read GPPL…ANHL and RPNL…KRCQ. 2 consecutive DNA-binding regions (H-T-H motif) follow at residues 65–89 and 117–140; these read WNAVQKNTGLFRCGKSCRLRWANHL and WARMAAHLPGRTDNEIKNYWNTRI. Residues 464–489 are disordered; that stretch reads PAQSTSMGSGEQVMGPKYEPGDTSPH.

As to quaternary structure, interacts with MYBS1. Expressed in aleurone cells, inflorescence shoot apical region, stamen primordia, and tapetum cells of the anther. Expressed at low level in roots and vegetative shoots.

The protein resides in the nucleus. Its function is as follows. Transcriptional activator of gibberellin-dependent alpha-amylase expression in aleurone cells. Involved in pollen and floral organs development. May bind to the 5'-TAACAAA-3' box of alpha-amylase promoter. Required for anther development. Functions in parallel with UDT1 to regulate early anther development. Functions upstream of the transcription factor TDR and may positively regulate its transcription. Required for pollen development. Probably required for controlling tapetal cell size and promoting tapetal programmed cell death (PCD) during anther development. Required for exine and Ubisch body formation in anthers. Interacts with the DNA specific motifs of giberrellin-up-regulated genes of anthers and regulates their expression. Positively regulates the expression of the laurate hydroxylase CYP703A3, known to be essential for the development of pollen exine and anther epicuticular layer. Functions with MYBS1 to integrate diverse nutrient starvation and gibberellin (GA) signaling pathways during germination of grains. Sugar, nitrogen and phosphate starvation signals converge and interconnect with GA to promote the co-nuclear import of GAMYB and MYBS1, resulting in the expression of a large set of GA-inducible hydrolases, transporters and regulators that are essential for mobilization of nutrient reserves in the endosperm to support seedling growth. This chain is Transcription factor GAMYB, found in Oryza sativa subsp. japonica (Rice).